Reading from the N-terminus, the 100-residue chain is NADH-quinone oxidoreductase subunit K (100 aa).

Transmembrane regions (helical) follow at residues 4–24 (LSNY…GVLT), 29–49 (IVVF…FVAF), and 60–80 (IFVF…LALF).

This sequence belongs to the complex I subunit 4L family. As to quaternary structure, NDH-1 is composed of 14 different subunits. Subunits NuoA, H, J, K, L, M, N constitute the membrane sector of the complex.

It localises to the cell inner membrane. The catalysed reaction is a quinone + NADH + 5 H(+)(in) = a quinol + NAD(+) + 4 H(+)(out). NDH-1 shuttles electrons from NADH, via FMN and iron-sulfur (Fe-S) centers, to quinones in the respiratory chain. The immediate electron acceptor for the enzyme in this species is believed to be ubiquinone. Couples the redox reaction to proton translocation (for every two electrons transferred, four hydrogen ions are translocated across the cytoplasmic membrane), and thus conserves the redox energy in a proton gradient. This chain is NADH-quinone oxidoreductase subunit K, found in Trichlorobacter lovleyi (strain ATCC BAA-1151 / DSM 17278 / SZ) (Geobacter lovleyi).